The sequence spans 191 residues: dCTP deaminase (191 aa).

Residues K112 to R117, T136 to E138, Q157, Y173, and Q183 each bind dCTP. E138 serves as the catalytic Proton donor/acceptor.

Belongs to the dCTP deaminase family. Homotrimer.

The enzyme catalyses dCTP + H2O + H(+) = dUTP + NH4(+). It functions in the pathway pyrimidine metabolism; dUMP biosynthesis; dUMP from dCTP (dUTP route): step 1/2. In terms of biological role, catalyzes the deamination of dCTP to dUTP. The polypeptide is dCTP deaminase (Xylella fastidiosa (strain 9a5c)).